We begin with the raw amino-acid sequence, 447 residues long: N-succinylarginine dihydrolase (447 aa).

Residues 19 to 28 (AGLSFGNEAS), N110, and 137 to 138 (HR) contribute to the substrate site. E174 is an active-site residue. Residue R212 coordinates substrate. H248 is an active-site residue. Substrate contacts are provided by D250 and N359. C365 serves as the catalytic Nucleophile.

It belongs to the succinylarginine dihydrolase family. Homodimer.

The enzyme catalyses N(2)-succinyl-L-arginine + 2 H2O + 2 H(+) = N(2)-succinyl-L-ornithine + 2 NH4(+) + CO2. The protein operates within amino-acid degradation; L-arginine degradation via AST pathway; L-glutamate and succinate from L-arginine: step 2/5. Functionally, catalyzes the hydrolysis of N(2)-succinylarginine into N(2)-succinylornithine, ammonia and CO(2). This Escherichia coli O9:H4 (strain HS) protein is N-succinylarginine dihydrolase.